The chain runs to 433 residues: 4-hydroxy-3-methylbut-2-en-1-yl diphosphate synthase (flavodoxin) (433 aa).

Over residues 1–13 (MNKPETVTENSLA) the composition is skewed to polar residues. The disordered stretch occupies residues 1–23 (MNKPETVTENSLASDVAGPAPRH). Positions 314, 317, 360, and 367 each coordinate [4Fe-4S] cluster.

The protein belongs to the IspG family. [4Fe-4S] cluster is required as a cofactor.

It carries out the reaction (2E)-4-hydroxy-3-methylbut-2-enyl diphosphate + oxidized [flavodoxin] + H2O + 2 H(+) = 2-C-methyl-D-erythritol 2,4-cyclic diphosphate + reduced [flavodoxin]. The protein operates within isoprenoid biosynthesis; isopentenyl diphosphate biosynthesis via DXP pathway; isopentenyl diphosphate from 1-deoxy-D-xylulose 5-phosphate: step 5/6. Functionally, converts 2C-methyl-D-erythritol 2,4-cyclodiphosphate (ME-2,4cPP) into 1-hydroxy-2-methyl-2-(E)-butenyl 4-diphosphate. The protein is 4-hydroxy-3-methylbut-2-en-1-yl diphosphate synthase (flavodoxin) of Bradyrhizobium sp. (strain ORS 278).